The chain runs to 396 residues: Phosphoglycerate kinase (396 aa).

Residues 21-23, Arg36, 59-62, Arg119, and Arg156 contribute to the substrate site; these read DFN and HLGK. Residues Lys206, Glu325, and 352 to 355 contribute to the ATP site; that span reads GGDS.

The protein belongs to the phosphoglycerate kinase family. Monomer.

The protein localises to the cytoplasm. It carries out the reaction (2R)-3-phosphoglycerate + ATP = (2R)-3-phospho-glyceroyl phosphate + ADP. It participates in carbohydrate degradation; glycolysis; pyruvate from D-glyceraldehyde 3-phosphate: step 2/5. This is Phosphoglycerate kinase from Macrococcus caseolyticus (strain JCSC5402) (Macrococcoides caseolyticum).